A 367-amino-acid chain; its full sequence is MKLSDFDFDLPTELIAQYPASERDNSDLLIATTPPIKTKFYNIIDYLKEGDLLVFNNSKVIKAKLNLERNITINLNQKLSDDSWSAFAKPARKLNIGDEFYSDNHKVIITEKFAMGEIKVKFELDNISVFEFLDKYGEMPLPVYIRRSKRHGEEEESSDEAISSQNPEIATESKRTPSNDDKLDSLRYQTIYSQIEGSVAAPTAGLHFTKEILDKLKAKGVQIAFVTLHVGAGTFLPVKTENIHEHKIHTEYCSITPETAEIINKAKQERRRIIAVGTTTLRTLESSCNNGVVKAGSFETDIFITPGFKFQTTDMLLTNFHFPKSTLFMLICAFAGFKEMHELYKYAIKEKMRFFSYGDATVLYRKV.

The tract at residues 150-182 is disordered; sequence RHGEEEESSDEAISSQNPEIATESKRTPSNDDK. The segment covering 171–182 has biased composition (basic and acidic residues); sequence TESKRTPSNDDK.

Belongs to the QueA family. In terms of assembly, monomer.

The protein resides in the cytoplasm. The catalysed reaction is 7-aminomethyl-7-carbaguanosine(34) in tRNA + S-adenosyl-L-methionine = epoxyqueuosine(34) in tRNA + adenine + L-methionine + 2 H(+). The protein operates within tRNA modification; tRNA-queuosine biosynthesis. Its function is as follows. Transfers and isomerizes the ribose moiety from AdoMet to the 7-aminomethyl group of 7-deazaguanine (preQ1-tRNA) to give epoxyqueuosine (oQ-tRNA). This is S-adenosylmethionine:tRNA ribosyltransferase-isomerase from Rickettsia felis (strain ATCC VR-1525 / URRWXCal2) (Rickettsia azadi).